Consider the following 208-residue polypeptide: Small ribosomal subunit protein uS4 (208 aa).

Residues 98–161 enclose the S4 RNA-binding domain; it reads TRLDNTVYRL…RKIPVIAEAQ (64 aa).

Belongs to the universal ribosomal protein uS4 family. As to quaternary structure, part of the 30S ribosomal subunit. Contacts protein S5. The interaction surface between S4 and S5 is involved in control of translational fidelity.

Functionally, one of the primary rRNA binding proteins, it binds directly to 16S rRNA where it nucleates assembly of the body of the 30S subunit. In terms of biological role, with S5 and S12 plays an important role in translational accuracy. This chain is Small ribosomal subunit protein uS4, found in Maridesulfovibrio salexigens (strain ATCC 14822 / DSM 2638 / NCIMB 8403 / VKM B-1763) (Desulfovibrio salexigens).